An 87-amino-acid polypeptide reads, in one-letter code: Phosphocarrier protein HPr (87 aa).

One can recognise an HPr domain in the interval 1–87 (MEKIFKVTSD…ETMKNEGLGE (87 aa)). H14 (pros-phosphohistidine intermediate; alternate) is an active-site residue. Tele-phosphohistidine; alternate is present on H14. At S45 the chain carries Phosphoserine; by HPrK/P.

This sequence belongs to the HPr family. The form phosphorylated at the tele nitrogen (N(epsilon)2), instead of the expected pros nitrogen (N(delta)1), of His-14 is not able to transfer its phosphoryl group to the B.subtilis EIIA-Glc domain. This form may be inactive in PTS-catalyzed sugar transport or target an as yet unknown acceptor molecule in an alternative metabolic process.

Its subcellular location is the cytoplasm. Its activity is regulated as follows. Phosphorylation on Ser-45 inhibits the phosphoryl transfer from enzyme I to HPr. Functionally, general (non sugar-specific) component of the phosphoenolpyruvate-dependent sugar phosphotransferase system (sugar PTS). This major carbohydrate active-transport system catalyzes the phosphorylation of incoming sugar substrates concomitantly with their translocation across the cell membrane. The phosphoryl group from phosphoenolpyruvate (PEP) is transferred to the phosphoryl carrier protein HPr by enzyme I. Phospho-HPr then transfers it to the PTS EIIA domain. In terms of biological role, P-Ser-HPr interacts with the catabolite control protein A (CcpA), forming a complex that binds to DNA at the catabolite response elements cre, operator sites preceding a large number of catabolite-regulated genes. Thus, P-Ser-HPr is a corepressor in carbon catabolite repression (CCR), a mechanism that allows bacteria to coordinate and optimize the utilization of available carbon sources. P-Ser-HPr mediates glucose catabolite repression of cry4A toxin expression. This chain is Phosphocarrier protein HPr (ptsH), found in Bacillus thuringiensis subsp. israelensis.